A 1148-amino-acid polypeptide reads, in one-letter code: Phospholipid-transporting ATPase IB (1148 aa).

Residues 1–54 lie on the Cytoplasmic side of the membrane; sequence MSRATSVGDQLDVPARTIYLNQPHLNKFCDNQISTAKYSVVTFLPRFLYEQIRR. A Phosphothreonine modification is found at Thr-5. The helical transmembrane segment at 55–75 threads the bilayer; it reads AANAFFLFIALLQQIPDVSPT. Topologically, residues 76 to 79 are exoplasmic loop; the sequence is GRYT. Residues 80–100 traverse the membrane as a helical segment; the sequence is TLVPLIIILTIAGIKEIVEDF. The Cytoplasmic portion of the chain corresponds to 101–276; it reads KRHKADNAVN…SNVEKVTNVQ (176 aa). Residues 277-297 form a helical membrane-spanning segment; that stretch reads ILVLFGILLVMALVSSVGALY. At 298–324 the chain is on the exoplasmic loop side; it reads WNGSQGGKNWYIKKMDATSDNFGYNLL. The chain crosses the membrane as a helical span at residues 325–345; sequence TFIILYNNLIPISLLVTLEVV. At 346 to 847 the chain is on the cytoplasmic side; it reads KYTQALFINW…CILYCFYKNV (502 aa). The 4-aspartylphosphate intermediate role is filled by Asp-388. ATP-binding residues include Asp-388, Lys-389, Thr-390, Glu-488, Phe-529, Lys-552, Arg-585, Thr-665, Gly-666, Asp-667, Arg-755, and Lys-761. Asp-388 is a binding site for Mg(2+). Mg(2+) is bound at residue Thr-390. Residue Asp-781 participates in Mg(2+) binding. 2 residues coordinate ATP: Asn-784 and Asp-785. Asp-785 lines the Mg(2+) pocket. A helical membrane pass occupies residues 848 to 868; sequence VLYIIELWFAFVNGFSGQILF. At 869 to 870 the chain is on the exoplasmic loop side; sequence ER. The helical transmembrane segment at 871–891 threads the bilayer; the sequence is WCIGLYNVIFTALPPFTLGIF. Over 892–919 the chain is Cytoplasmic; sequence ERSCSQESMLRFPQLYKITQNAEGFNTK. The chain crosses the membrane as a helical span at residues 920-940; the sequence is VFWGHCINALVHSLILFWFPM. Over 941 to 957 the chain is Exoplasmic loop; sequence KALEHDTVLANGHATDY. A helical membrane pass occupies residues 958-978; it reads LFVGNIVYTYVVVTVCLKAGL. At 979–988 the chain is on the cytoplasmic side; the sequence is ETTAWTKFSH. The helical transmembrane segment at 989–1009 threads the bilayer; the sequence is LAVWGSMLIWLVFFGIYSTIW. Over 1010 to 1023 the chain is Exoplasmic loop; sequence PTIPIAPDMKGQAT. The chain crosses the membrane as a helical span at residues 1024–1044; that stretch reads MVLSSAHFWLGLFLVPTACLI. The Cytoplasmic portion of the chain corresponds to 1045–1148; sequence EDVAWRAAKH…DTTKQKSRKK (104 aa). Residues 1102–1126 form a disordered region; the sequence is PPTLFRGSSLQQSMPHGYAFSQEEH.

This sequence belongs to the cation transport ATPase (P-type) (TC 3.A.3) family. Type IV subfamily. In terms of assembly, component of a P4-ATPase flippase complex which consists of a catalytic alpha subunit and an accessory beta subunit. Interacts with TMEM30A to form a flippase complex. Mg(2+) serves as cofactor. As to expression, expressed in retinal photoreceptor cells and testis.

The protein resides in the membrane. Its subcellular location is the golgi apparatus membrane. It localises to the endosome membrane. The protein localises to the cell membrane. It is found in the photoreceptor outer segment membrane. The protein resides in the photoreceptor inner segment membrane. The catalysed reaction is ATP + H2O + phospholipidSide 1 = ADP + phosphate + phospholipidSide 2.. The enzyme catalyses a 1,2-diacyl-sn-glycero-3-phospho-L-serine(out) + ATP + H2O = a 1,2-diacyl-sn-glycero-3-phospho-L-serine(in) + ADP + phosphate + H(+). It carries out the reaction a 1,2-diacyl-sn-glycero-3-phosphoethanolamine(in) + ATP + H2O = a 1,2-diacyl-sn-glycero-3-phosphoethanolamine(out) + ADP + phosphate + H(+). With respect to regulation, ATPase activity is stimulated by phosphatidylserine (PS) and minimally by phosphatidylethanolamine (PE). ATPase activity is inhibited by N-ethylmaleimide (NEM) and vanadate. Flippase activity is inhibited by NEM and 1,2-dioleoyl-sn-glycero-3-phospho-L-serine (DOPS). Its function is as follows. Catalytic component of a P4-ATPase flippase complex which catalyzes the hydrolysis of ATP coupled to the transport of aminophospholipids from the outer to the inner leaflet of various membranes and ensures the maintenance of asymmetric distribution of phospholipids. Able to translocate phosphatidylserine, but not phosphatidylcholine. Phospholipid translocation seems also to be implicated in vesicle formation and in uptake of lipid signaling molecules. Reconstituted to liposomes, the ATP8A2:TMEM30A flippase complex predominantly transports phosphatidylserine (PS) and to a lesser extent phosphatidylethanolamine (PE). Phospholipid translocation is not associated with a countertransport of an inorganic ion or other charged substrate from the cytoplasmic side toward the exoplasm in connection with the phosphorylation from ATP. ATP8A2:TMEM30A may be involved in regulation of neurite outgrowth. Proposed to function in the generation and maintenance of phospholipid asymmetry in photoreceptor disk membranes and neuronal axon membranes. May be involved in vesicle trafficking in neuronal cells. Required for normal visual and auditory function; involved in photoreceptor and inner ear spiral ganglion cell survival. In Bos taurus (Bovine), this protein is Phospholipid-transporting ATPase IB.